The sequence spans 1035 residues: FACT complex subunit SPT16 (1035 aa).

The stretch at 432–500 (FLKKEDEEEE…AKRRLTEQKG (69 aa)) forms a coiled coil. Disordered stretches follow at residues 491–520 (AKRR…ASQV) and 920–1035 (EQGG…KRKK). A compositionally biased stretch (polar residues) spans 499–519 (KGGQQTMKARKSNVSYKNASQ). Positions 929-985 (PDGEGSDAAEGDSESELDDETFNPSEDEEEEEEDSDEDYSDETEDSVDSEESADSEE) are enriched in acidic residues. The segment covering 986–1006 (ESGKDWDELEEEARKADRESL) has biased composition (basic and acidic residues).

It belongs to the peptidase M24 family. SPT16 subfamily. As to quaternary structure, component of the FACT complex (also called the DUF complex), a stable heterodimer of ssrp1 and supt16h. May also be a component of a ck2-spt16-ssrp1 complex composed of ssrp1, supt16h, csnk2a1, csnk2a2 and csnk2b. The FACT complex may also interact with vcp.

It localises to the nucleus. It is found in the chromosome. Component of the FACT complex, a general chromatin factor that acts to reorganize nucleosomes. The FACT complex is involved in multiple processes that require DNA as a template such as mRNA elongation, DNA replication and DNA repair. During transcription elongation the FACT complex acts as a histone chaperone that both destabilizes and restores nucleosomal structure. It facilitates the passage of RNA polymerase II and transcription by promoting the dissociation of one histone H2A-H2B dimer from the nucleosome, then subsequently promotes the reestablishment of the nucleosome following the passage of RNA polymerase II. The sequence is that of FACT complex subunit SPT16 (supt16h) from Xenopus laevis (African clawed frog).